Consider the following 134-residue polypeptide: Cytochrome b5 (134 aa).

Position 2 is an N-acetylalanine (Ala2). N6-acetyllysine is present on residues Lys7, Lys10, and Lys19. Positions 9 to 85 (VKYYTLEEIQ…SKTYIIGELH (77 aa)) constitute a Cytochrome b5 heme-binding domain. Heme-binding residues include His44 and His68. The helical transmembrane segment at 109-131 (WWTNWVIPAISALAVALMYRLYM) threads the bilayer.

The protein belongs to the cytochrome b5 family.

It localises to the endoplasmic reticulum membrane. The protein localises to the microsome membrane. Cytochrome b5 is a membrane-bound hemoprotein functioning as an electron carrier for several membrane-bound oxygenases. It is also involved in several steps of the sterol biosynthesis pathway, particularly in the C-5 double bond introduction during the C-5 desaturation. This is Cytochrome b5 (Cyb5a) from Mus musculus (Mouse).